The primary structure comprises 240 residues: CRISPR system aCascade subunit Cas5 1 (240 aa).

The protein belongs to the CRISPR-associated protein Cas5 family. Subtype I-A/Apern subfamily. As to quaternary structure, part of the aCascade ribonucleoprotein complex, minimally composed of Csa2 and Cas5a, which binds crRNA. Other possible components of aCascade in strain P1 are Cas6b (SSO1437) and Csa5 (SSO1443), while SSO1399, Cas5b (SSO1400) and SSO1401 have sometimes been seen weakly associated. Csa2 is probably the major RNA-binding subunit. The Csa2-Cas5a-crRNA complex also binds target DNA homologous to crRNA, probably forming an R-loop. Purified aCascade forms a filament about 6 nm in width.

In terms of biological role, CRISPR (clustered regularly interspaced short palindromic repeat) is an adaptive immune system that provides protection against mobile genetic elements (viruses, transposable elements and conjugative plasmids). CRISPR clusters contain spacers, sequences complementary to antecedent mobile elements, and target invading nucleic acids. CRISPR clusters are transcribed and processed into CRISPR RNA (crRNA). The chain is CRISPR system aCascade subunit Cas5 1 (cas5a) from Saccharolobus solfataricus (strain ATCC 35092 / DSM 1617 / JCM 11322 / P2) (Sulfolobus solfataricus).